The sequence spans 280 residues: PsbP domain-containing protein 7, chloroplastic (280 aa).

A chloroplast-targeting transit peptide spans 1-36; it reads MSLKPYFSLLYSSPTNVKLSNFLIAQQPSGDLKTTP.

It belongs to the PsbP family.

The protein localises to the plastid. The protein resides in the chloroplast. The protein is PsbP domain-containing protein 7, chloroplastic (PPD7) of Arabidopsis thaliana (Mouse-ear cress).